The primary structure comprises 593 residues: Multidrug resistance-like ATP-binding protein MdlB (593 aa).

At 1 to 25 (MRSFSQLWPTLKRLLAYGSPWRKPL) the chain is on the cytoplasmic side. In terms of domain architecture, ABC transmembrane type-1 spans 25-310 (LGIAVLMMWV…LTTQQAMLQQ (286 aa)). Residues 26–46 (GIAVLMMWVAAAAEVSGPLLI) traverse the membrane as a helical segment. Topologically, residues 47–62 (SYFIDNMVAKNNLPLK) are periplasmic. The helical transmembrane segment at 63–83 (VVAGLAAAYVGLQLFAAGLHY) threads the bilayer. Residues 84–140 (AQSLLFNRAAVGVVQQLRTDVMDAALRQPLSEFDTQPVGQVISRVTNDTEVIRDLYV) are Cytoplasmic-facing. The helical transmembrane segment at 141-161 (TVVATVLRSAALVGAMLVAMF) threads the bilayer. Over 162–164 (SLD) the chain is Periplasmic. The chain crosses the membrane as a helical span at residues 165–185 (WRMALVAIMIFPVVLVVMVIY). Residues 186-254 (QRYSTPIVRR…LRLDGFLLRP (69 aa)) are Cytoplasmic-facing. A helical membrane pass occupies residues 255–275 (LLSLFSSLILCGLLMLFGFSA). Residues 276–278 (SGT) are Periplasmic-facing. The helical transmembrane segment at 279–299 (IEVGVLYAFISYLGRLNEPLI) threads the bilayer. Over 300-593 (ELTTQQAMLQ…SVREEESLSA (294 aa)) the chain is Cytoplasmic. Residues 341-574 (IEVDNVSFAY…QGRYWQMYQL (234 aa)) form the ABC transporter domain. Position 374 to 381 (374 to 381 (GHTGSGKS)) interacts with ATP.

The protein belongs to the ABC transporter superfamily. Drug exporter-2 (TC 3.A.1.117) family.

It localises to the cell inner membrane. It catalyses the reaction ATP + H2O + xenobioticSide 1 = ADP + phosphate + xenobioticSide 2.. The chain is Multidrug resistance-like ATP-binding protein MdlB (mdlB) from Escherichia coli O6:H1 (strain CFT073 / ATCC 700928 / UPEC).